The following is a 282-amino-acid chain: Undecaprenyl-diphosphatase (282 aa).

8 helical membrane passes run 7–29 (VLFA…HVVI), 45–65 (FLPF…LYFW), 89–109 (GLLL…FALK), 115–135 (LFAS…VLII), 153–173 (LTLR…LPGL), 196–216 (FAFL…VPHL), 229–249 (TALL…AFLM), and 258–278 (WALG…LILI).

It belongs to the UppP family.

Its subcellular location is the cell inner membrane. The enzyme catalyses di-trans,octa-cis-undecaprenyl diphosphate + H2O = di-trans,octa-cis-undecaprenyl phosphate + phosphate + H(+). Catalyzes the dephosphorylation of undecaprenyl diphosphate (UPP). Confers resistance to bacitracin. The chain is Undecaprenyl-diphosphatase from Acidiphilium cryptum (strain JF-5).